The following is a 375-amino-acid chain: Succinyl-diaminopimelate desuccinylase (375 aa).

A Zn(2+)-binding site is contributed by H66. Residue D68 is part of the active site. D99 contributes to the Zn(2+) binding site. E133 serves as the catalytic Proton acceptor. The Zn(2+) site is built by E134, E162, and H348.

It belongs to the peptidase M20A family. DapE subfamily. As to quaternary structure, homodimer. Zn(2+) is required as a cofactor. Requires Co(2+) as cofactor.

The catalysed reaction is N-succinyl-(2S,6S)-2,6-diaminopimelate + H2O = (2S,6S)-2,6-diaminopimelate + succinate. Its pathway is amino-acid biosynthesis; L-lysine biosynthesis via DAP pathway; LL-2,6-diaminopimelate from (S)-tetrahydrodipicolinate (succinylase route): step 3/3. Its function is as follows. Catalyzes the hydrolysis of N-succinyl-L,L-diaminopimelic acid (SDAP), forming succinate and LL-2,6-diaminopimelate (DAP), an intermediate involved in the bacterial biosynthesis of lysine and meso-diaminopimelic acid, an essential component of bacterial cell walls. This Escherichia coli O7:K1 (strain IAI39 / ExPEC) protein is Succinyl-diaminopimelate desuccinylase.